A 314-amino-acid chain; its full sequence is Inactive protein FRIGIDA (314 aa).

Residues 1 to 18 are compositionally biased toward low complexity; the sequence is MSNYPPTVAAQPTTTANP. Positions 1-31 are disordered; that stretch reads MSNYPPTVAAQPTTTANPLLQRHQSEQRRRE. Residues 67-97 are a coiled coil; the sequence is VAVETFKRQFDDLQKHIESIENAIDSKLESN.

This sequence belongs to the Frigida family.

The protein resides in the nucleus. In Arabidopsis thaliana (Mouse-ear cress), this protein is Inactive protein FRIGIDA (FRI).